Reading from the N-terminus, the 171-residue chain is Shikimate kinase (171 aa).

11 to 16 (ATGKTT) contributes to the ATP binding site. Threonine 15 serves as a coordination point for Mg(2+). Substrate contacts are provided by aspartate 33, arginine 57, and glycine 79. Arginine 117 serves as a coordination point for ATP. Substrate is bound at residue arginine 136.

Belongs to the shikimate kinase family. Monomer. It depends on Mg(2+) as a cofactor.

The protein localises to the cytoplasm. The enzyme catalyses shikimate + ATP = 3-phosphoshikimate + ADP + H(+). The protein operates within metabolic intermediate biosynthesis; chorismate biosynthesis; chorismate from D-erythrose 4-phosphate and phosphoenolpyruvate: step 5/7. Catalyzes the specific phosphorylation of the 3-hydroxyl group of shikimic acid using ATP as a cosubstrate. The sequence is that of Shikimate kinase from Thermoanaerobacter pseudethanolicus (strain ATCC 33223 / 39E) (Clostridium thermohydrosulfuricum).